Reading from the N-terminus, the 585-residue chain is Bestrophin-1 (585 aa).

Topologically, residues 1–31 (MTITYTSQVANARLGSFSRLLLCWRGSIYKL) are cytoplasmic. Ala-10 contributes to the Ca(2+) binding site. The helical transmembrane segment at 32 to 51 (LYGEFFIFLLCYYIIRFIYR) threads the bilayer. At 52 to 60 (LALTEEQQL) the chain is on the extracellular side. The helical transmembrane segment at 61-82 (MFEKLTLYCDSYIQLIPISFVL) threads the bilayer. The Cytoplasmic segment spans residues 83 to 237 (GFYVTLVVTR…DWISIPLVYT (155 aa)). The chain crosses the membrane as a helical span at residues 238–255 (QVVTVAVYSFFLTCLVGR). Topologically, residues 256-274 (QFLNPAKAYPGHELDLVVP) are extracellular. Residues 275–288 (VFTFLQFFFYVGWL) traverse the membrane as a helical segment. The Cytoplasmic portion of the chain corresponds to 289–585 (KVAEQLINPF…ALENRDEAHS (297 aa)). 4 residues coordinate Ca(2+): Gln-293, Asn-296, Asp-301, and Asp-304. Residues 346–379 (PYTAASAQFRRASFMGSTFNISLNKEEMEFQPNQ) form an auto-inhibitory segment region.

The protein belongs to the anion channel-forming bestrophin (TC 1.A.46) family. Calcium-sensitive chloride channel subfamily. Interacts with YWHAG; this interaction promotes the ligand-gated L-glutamate channel activity leading to the positive regulation of NMDA glutamate receptor activity through the L-glutamate secretion.

The protein localises to the cell membrane. It localises to the basolateral cell membrane. It carries out the reaction chloride(in) = chloride(out). It catalyses the reaction hydrogencarbonate(in) = hydrogencarbonate(out). The catalysed reaction is 4-aminobutanoate(in) = 4-aminobutanoate(out). The enzyme catalyses L-glutamate(out) = L-glutamate(in). Ligand-gated anion channel that allows the movement of anions across cell membranes when activated by calcium (Ca2+). Allows the movement of chloride and hydrogencarbonate. Found in a partially open conformation leading to significantly smaller chloride movement. Upon F2R/PAR-1 activation, the sequestered calcium is released into the cytosol of astrocytes, leading to the (Ca2+)-dependent release of L-glutamate into the synaptic cleft that targets the neuronal postsynaptic GRIN2A/NMDAR receptor resulting in the synaptic plasticity regulation. Upon activation of the norepinephrine-alpha-1 adrenergic receptor signaling pathway, transports as well D-serine than L-glutamate in a (Ca2+)-dependent manner, leading to activation of adjacent NMDAR receptors and therefore regulates the heterosynaptic long-term depression and metaplasticity during initial memory acquisition. Releases the 4-aminobutanoate neurotransmitter in a (Ca2+)-dependent manner, and participates in its tonic release from cerebellar glial cells. This chain is Bestrophin-1 (BEST1), found in Macaca fascicularis (Crab-eating macaque).